The chain runs to 449 residues: 3-phosphoshikimate 1-carboxyvinyltransferase (449 aa).

Residues methionine 1–serine 29 form a disordered region. Residues lysine 28, serine 29, and arginine 33 each contribute to the 3-phosphoshikimate site. Residue lysine 28 participates in phosphoenolpyruvate binding. Phosphoenolpyruvate-binding residues include glycine 101 and arginine 129. The 3-phosphoshikimate site is built by serine 175, glutamine 177, aspartate 330, and lysine 357. Glutamine 177 serves as a coordination point for phosphoenolpyruvate. The active-site Proton acceptor is aspartate 330. Phosphoenolpyruvate-binding residues include arginine 361 and arginine 405.

It belongs to the EPSP synthase family. As to quaternary structure, monomer.

It is found in the cytoplasm. It catalyses the reaction 3-phosphoshikimate + phosphoenolpyruvate = 5-O-(1-carboxyvinyl)-3-phosphoshikimate + phosphate. The protein operates within metabolic intermediate biosynthesis; chorismate biosynthesis; chorismate from D-erythrose 4-phosphate and phosphoenolpyruvate: step 6/7. Catalyzes the transfer of the enolpyruvyl moiety of phosphoenolpyruvate (PEP) to the 5-hydroxyl of shikimate-3-phosphate (S3P) to produce enolpyruvyl shikimate-3-phosphate and inorganic phosphate. This Methylobacterium sp. (strain 4-46) protein is 3-phosphoshikimate 1-carboxyvinyltransferase.